Reading from the N-terminus, the 368-residue chain is MPLPAIDPAEYASQLADKVTQFKHAFTPFAVPEPTVFPSAPLHYRLRAEFRMWHDGERIDYAMFDPAEPKQPIAIEQFDIAAEPICAAMPRLRERLRASETLKRRLFQVEFLATLSGELMISLIYHRPLDESWEAAARELAAELNVQLIGRSRKQKIVLDRDWVLERFALDGRPLQYKQIEGSFTQPNGGVNRQMLGWACEQVRGVGGDLLELYCGNGNFTVALAPLFDRVLATEVSKTSVEAAHYNLAANDIGNVAMVRMSSDEISAALARTREFRRMKDVDLDRYRFSTLFVDPPRSGLDAPTVELARGFDRILYISCNPQTLQENVAALQATHGIAGAAVFDQFPYTRHLECGLLLTRRGGPRAP.

Q186, Y214, N219, E235, and D295 together coordinate S-adenosyl-L-methionine. C320 acts as the Nucleophile in catalysis. The Proton acceptor role is filled by E354.

Belongs to the class I-like SAM-binding methyltransferase superfamily. RNA M5U methyltransferase family. TrmA subfamily.

It catalyses the reaction uridine(54) in tRNA + S-adenosyl-L-methionine = 5-methyluridine(54) in tRNA + S-adenosyl-L-homocysteine + H(+). It carries out the reaction uridine(341) in tmRNA + S-adenosyl-L-methionine = 5-methyluridine(341) in tmRNA + S-adenosyl-L-homocysteine + H(+). Dual-specificity methyltransferase that catalyzes the formation of 5-methyluridine at position 54 (m5U54) in all tRNAs, and that of position 341 (m5U341) in tmRNA (transfer-mRNA). The sequence is that of tRNA/tmRNA (uracil-C(5))-methyltransferase from Aromatoleum aromaticum (strain DSM 19018 / LMG 30748 / EbN1) (Azoarcus sp. (strain EbN1)).